A 308-amino-acid polypeptide reads, in one-letter code: Mitochondrial import receptor subunit TOM40B (308 aa).

Residues 281 to 308 (PLPVTLALGAFLNHWRNRFHCGFSITVG) form a required for mitochondrial targeting region.

The protein belongs to the Tom40 family. In terms of assembly, forms part of the preprotein translocase of the outer mitochondrial membrane (TOM complex) containing TOMM22, TOMM40, TOMM40L and TOMM70. Interacts with mitochondrial targeting sequences. As to expression, widely expressed. Higher levels in heart, brain and liver, very low level in testis.

Its subcellular location is the mitochondrion outer membrane. Its function is as follows. Potential channel-forming protein implicated in import of protein precursors into mitochondria. This chain is Mitochondrial import receptor subunit TOM40B, found in Rattus norvegicus (Rat).